The chain runs to 365 residues: Chaperone protein DnaJ (365 aa).

Residues 5 to 71 (DFYEILGIAK…QKRQAYDQFG (67 aa)) form the J domain. The CR-type zinc finger occupies 128-206 (GTTVKIRIPK…CHGKGVVHKQ (79 aa)). Residues cysteine 141, cysteine 144, cysteine 158, cysteine 161, cysteine 180, cysteine 183, cysteine 194, and cysteine 197 each coordinate Zn(2+). CXXCXGXG motif repeat units lie at residues 141–148 (CDTCSGTG), 158–165 (CLTCGGAG), 180–187 (CNACSGTG), and 194–201 (CNNCHGKG).

Belongs to the DnaJ family. As to quaternary structure, homodimer. The cofactor is Zn(2+).

Its subcellular location is the cytoplasm. In terms of biological role, participates actively in the response to hyperosmotic and heat shock by preventing the aggregation of stress-denatured proteins and by disaggregating proteins, also in an autonomous, DnaK-independent fashion. Unfolded proteins bind initially to DnaJ; upon interaction with the DnaJ-bound protein, DnaK hydrolyzes its bound ATP, resulting in the formation of a stable complex. GrpE releases ADP from DnaK; ATP binding to DnaK triggers the release of the substrate protein, thus completing the reaction cycle. Several rounds of ATP-dependent interactions between DnaJ, DnaK and GrpE are required for fully efficient folding. Also involved, together with DnaK and GrpE, in the DNA replication of plasmids through activation of initiation proteins. This Vesicomyosocius okutanii subsp. Calyptogena okutanii (strain HA) protein is Chaperone protein DnaJ.